A 150-amino-acid polypeptide reads, in one-letter code: Aspartate 1-decarboxylase (150 aa).

Catalysis depends on serine 25, which acts as the Schiff-base intermediate with substrate; via pyruvic acid. Serine 25 bears the Pyruvic acid (Ser) mark. Position 57 (threonine 57) interacts with substrate. The active-site Proton donor is the tyrosine 58. 73 to 75 (GAA) provides a ligand contact to substrate.

It belongs to the PanD family. As to quaternary structure, heterooctamer of four alpha and four beta subunits. Pyruvate serves as cofactor. Post-translationally, is synthesized initially as an inactive proenzyme, which is activated by self-cleavage at a specific serine bond to produce a beta-subunit with a hydroxyl group at its C-terminus and an alpha-subunit with a pyruvoyl group at its N-terminus.

It localises to the cytoplasm. It catalyses the reaction L-aspartate + H(+) = beta-alanine + CO2. It participates in cofactor biosynthesis; (R)-pantothenate biosynthesis; beta-alanine from L-aspartate: step 1/1. Functionally, catalyzes the pyruvoyl-dependent decarboxylation of aspartate to produce beta-alanine. The polypeptide is Aspartate 1-decarboxylase (Kocuria rhizophila (strain ATCC 9341 / DSM 348 / NBRC 103217 / DC2201)).